A 476-amino-acid chain; its full sequence is tRNA(Ile)-lysidine synthase (476 aa).

Residue 30 to 35 (SGGPDS) coordinates ATP.

Belongs to the tRNA(Ile)-lysidine synthase family.

Its subcellular location is the cytoplasm. The catalysed reaction is cytidine(34) in tRNA(Ile2) + L-lysine + ATP = lysidine(34) in tRNA(Ile2) + AMP + diphosphate + H(+). Ligates lysine onto the cytidine present at position 34 of the AUA codon-specific tRNA(Ile) that contains the anticodon CAU, in an ATP-dependent manner. Cytidine is converted to lysidine, thus changing the amino acid specificity of the tRNA from methionine to isoleucine. This chain is tRNA(Ile)-lysidine synthase, found in Bacillus cereus (strain ZK / E33L).